The primary structure comprises 697 residues: MSTLLIELLTEELPPKALARLGEAFAQSLFDGLSAQGLLEEGAQVEGFATPRRLAASITGVRRAAPDRELREKVLPVNIAFDAEGKPTAPLTKKLAALAKSIGADTIAPESLERAPDGKAESLFHRYTARGAVLADGLQAALSQTIAGLPIPKVMIYQRPNGDNVQFVRPAHRLIALLDDEIIPAGVLGLQSGNVTLGHRFLSAGEIIIPHATAYASTLKSQGKVIAGYAERKEAIRAELLKAAGADTVVMPEALLDEVNALVEWPVVYPCHFEEQFLAVPQECLILTMQTNQKYFALTDAQGHLRNRFLIVSNLATETPQAIIEGNERVVRPRLADARFFFEHDKKKPLADRVPQLARVVYHNKIGTQLERVSRLQAIAGQLAEKLGAEVAHASRAALLAKADLLTDMVGEFPELQGTMGTYYARHDGEAEDVALACSEHYQPRFAGDALPGTATGTVVALADKLETLVGIWGIGLAPTGEKDPFALRRHALGILRMLIEKPLALGIAEVLEAAAASFEGIAAVKPDLAAITDFLYDRLRGYLKDKGYSTNEVEAVVSQRPQRLDDIVARLEAVRAFAALPQAEALAAANKRITNILKKTDITIGSVQPQLLREDAERALHQAVATSEPHVHDAFARGDFTTALKTLASLREAVDSFFDGVMVMADDTALRDNRLALLGELHGLMNRVADISKLAA.

Belongs to the class-II aminoacyl-tRNA synthetase family. Tetramer of two alpha and two beta subunits.

It is found in the cytoplasm. It catalyses the reaction tRNA(Gly) + glycine + ATP = glycyl-tRNA(Gly) + AMP + diphosphate. This Ralstonia nicotianae (strain ATCC BAA-1114 / GMI1000) (Ralstonia solanacearum) protein is Glycine--tRNA ligase beta subunit.